Consider the following 164-residue polypeptide: 3-hydroxyacyl-[acyl-carrier-protein] dehydratase FabZ (164 aa).

His-70 is an active-site residue.

This sequence belongs to the thioester dehydratase family. FabZ subfamily.

It localises to the cytoplasm. It carries out the reaction a (3R)-hydroxyacyl-[ACP] = a (2E)-enoyl-[ACP] + H2O. In terms of biological role, involved in unsaturated fatty acids biosynthesis. Catalyzes the dehydration of short chain beta-hydroxyacyl-ACPs and long chain saturated and unsaturated beta-hydroxyacyl-ACPs. This chain is 3-hydroxyacyl-[acyl-carrier-protein] dehydratase FabZ, found in Synechocystis sp. (strain ATCC 27184 / PCC 6803 / Kazusa).